Consider the following 228-residue polypeptide: Thermonuclease (228 aa).

A signal peptide spans Met1–Ala23. A propeptide spanning residues Ile24–Ala60 is cleaved from the precursor. A compositionally biased stretch (polar residues) spans Ala58–Ser70. The segment at Ala58 to Thr83 is disordered. Asp100 contributes to the Ca(2+) binding site. Arg114 is a catalytic residue. Ca(2+)-binding residues include Asp119 and Thr120. Active-site residues include Glu122 and Arg166.

Belongs to the thermonuclease family. It depends on Ca(2+) as a cofactor.

The protein localises to the secreted. It catalyses the reaction Endonucleolytic cleavage to nucleoside 3'-phosphates and 3'-phosphooligonucleotide end-products.. Its function is as follows. Enzyme that catalyzes the hydrolysis of both DNA and RNA at the 5' position of the phosphodiester bond. In Staphylococcus aureus (strain COL), this protein is Thermonuclease (nuc).